The sequence spans 160 residues: SsrA-binding protein (160 aa).

The segment covering 137 to 153 (DKRDDIKTREWKQDKAR) has biased composition (basic and acidic residues). Positions 137-160 (DKRDDIKTREWKQDKARIMKNANR) are disordered.

The protein belongs to the SmpB family.

The protein resides in the cytoplasm. Required for rescue of stalled ribosomes mediated by trans-translation. Binds to transfer-messenger RNA (tmRNA), required for stable association of tmRNA with ribosomes. tmRNA and SmpB together mimic tRNA shape, replacing the anticodon stem-loop with SmpB. tmRNA is encoded by the ssrA gene; the 2 termini fold to resemble tRNA(Ala) and it encodes a 'tag peptide', a short internal open reading frame. During trans-translation Ala-aminoacylated tmRNA acts like a tRNA, entering the A-site of stalled ribosomes, displacing the stalled mRNA. The ribosome then switches to translate the ORF on the tmRNA; the nascent peptide is terminated with the 'tag peptide' encoded by the tmRNA and targeted for degradation. The ribosome is freed to recommence translation, which seems to be the essential function of trans-translation. The sequence is that of SsrA-binding protein from Edwardsiella ictaluri (strain 93-146).